The sequence spans 303 residues: Probable 5-dehydro-4-deoxyglucarate dehydratase (303 aa).

The protein belongs to the DapA family.

It catalyses the reaction 5-dehydro-4-deoxy-D-glucarate + H(+) = 2,5-dioxopentanoate + CO2 + H2O. It functions in the pathway carbohydrate acid metabolism; D-glucarate degradation; 2,5-dioxopentanoate from D-glucarate: step 2/2. The protein is Probable 5-dehydro-4-deoxyglucarate dehydratase of Pseudomonas syringae pv. tomato (strain ATCC BAA-871 / DC3000).